We begin with the raw amino-acid sequence, 430 residues long: Tol-Pal system protein TolB (430 aa).

The N-terminal stretch at 1–21 (MKQALRVAFGFLMLWAAVLHA) is a signal peptide.

Belongs to the TolB family. The Tol-Pal system is composed of five core proteins: the inner membrane proteins TolA, TolQ and TolR, the periplasmic protein TolB and the outer membrane protein Pal. They form a network linking the inner and outer membranes and the peptidoglycan layer.

The protein localises to the periplasm. Its function is as follows. Part of the Tol-Pal system, which plays a role in outer membrane invagination during cell division and is important for maintaining outer membrane integrity. TolB occupies a key intermediary position in the Tol-Pal system because it communicates directly with both membrane-embedded components, Pal in the outer membrane and TolA in the inner membrane. The polypeptide is Tol-Pal system protein TolB (Salmonella typhi).